Reading from the N-terminus, the 105-residue chain is Prokineticin-1 (105 aa).

Positions 1–19 (MRGAVHIFIMLLLATASDC) are cleaved as a signal peptide. 5 disulfides stabilise this stretch: Cys26–Cys38, Cys32–Cys50, Cys37–Cys78, Cys60–Cys86, and Cys80–Cys96.

The protein belongs to the AVIT (prokineticin) family. Highly expressed in liver and ovary and weakly expressed in testis and placenta. Expressed in mucosa and mesenchyme of embryonic gut during enteric nervous system development (at protein level). Predominantly expressed in kidney and liver. Also expressed in lung, ovary, placenta and testis. In fetal liver, is restricted to and highly expressed in hepatocytes. In adult kidney, expression is restricted to the endothelial tubule cells. In placenta, expressed throughout gestation.

It is found in the secreted. Functionally, potently contracts gastrointestinal (GI) smooth muscle. Induces proliferation, migration and fenestration (the formation of membrane discontinuities) in capillary endothelial cells. Induces proliferation and differentiation, but not migration, of enteric neural crest cells. Directly influences neuroblastoma progression by promoting the proliferation and migration of neuroblastoma cells. Positively regulates PTGS2 expression and prostaglandin synthesis. May play a role in placentation. May play a role in normal and pathological testis angiogenesis. The chain is Prokineticin-1 from Mus musculus (Mouse).